The following is a 462-amino-acid chain: L-seryl-tRNA(Sec) selenium transferase (462 aa).

Lys292 is subject to N6-(pyridoxal phosphate)lysine.

This sequence belongs to the SelA family. It depends on pyridoxal 5'-phosphate as a cofactor.

The protein resides in the cytoplasm. The catalysed reaction is L-seryl-tRNA(Sec) + selenophosphate + H(+) = L-selenocysteinyl-tRNA(Sec) + phosphate. It participates in aminoacyl-tRNA biosynthesis; selenocysteinyl-tRNA(Sec) biosynthesis; selenocysteinyl-tRNA(Sec) from L-seryl-tRNA(Sec) (bacterial route): step 1/1. In terms of biological role, converts seryl-tRNA(Sec) to selenocysteinyl-tRNA(Sec) required for selenoprotein biosynthesis. The chain is L-seryl-tRNA(Sec) selenium transferase from Geobacter sulfurreducens (strain ATCC 51573 / DSM 12127 / PCA).